A 373-amino-acid chain; its full sequence is Glutamate 5-kinase (373 aa).

Position 16 (Lys-16) interacts with ATP. Residues Ser-56, Asp-143, and Asn-155 each coordinate substrate. 175-176 (TD) lines the ATP pocket. The region spanning 281-359 (RGRLTLDDGA…SRIDSLLGYK (79 aa)) is the PUA domain.

The protein belongs to the glutamate 5-kinase family.

It localises to the cytoplasm. The catalysed reaction is L-glutamate + ATP = L-glutamyl 5-phosphate + ADP. It functions in the pathway amino-acid biosynthesis; L-proline biosynthesis; L-glutamate 5-semialdehyde from L-glutamate: step 1/2. Its function is as follows. Catalyzes the transfer of a phosphate group to glutamate to form L-glutamate 5-phosphate. The sequence is that of Glutamate 5-kinase from Saccharophagus degradans (strain 2-40 / ATCC 43961 / DSM 17024).